The sequence spans 148 residues: Large ribosomal subunit protein uL13 (148 aa).

This sequence belongs to the universal ribosomal protein uL13 family. As to quaternary structure, part of the 50S ribosomal subunit.

This protein is one of the early assembly proteins of the 50S ribosomal subunit, although it is not seen to bind rRNA by itself. It is important during the early stages of 50S assembly. This is Large ribosomal subunit protein uL13 from Lacticaseibacillus casei (strain BL23) (Lactobacillus casei).